The chain runs to 101 residues: Gamma-secretase subunit PEN-2 (101 aa).

At 1 to 17 (MNLERVSNEEKLNLCRK) the chain is on the cytoplasmic side. Positions 18–36 (YYLGGFAFLPFLWLVNIFW) form an intramembrane region, helical. Residues 37–57 (FFREAFIVPAYTEQSQIKGYV) are Cytoplasmic-facing. A helical membrane pass occupies residues 58-78 (WRSAVGFFLWVIVLSTWITIF). The Lumenal segment spans residues 79–101 (QIYRPRWGALGDYLSFTIPLGTP).

This sequence belongs to the PEN-2 family. In terms of assembly, the functional gamma-secretase complex is composed of at least four polypeptides: a presenilin homodimer (PSEN1 or PSEN2), nicastrin (NCSTN), APH1 (APH1A or APH1B) and PSENEN.

Its subcellular location is the endoplasmic reticulum membrane. The protein resides in the golgi apparatus. It is found in the golgi stack membrane. It localises to the cell membrane. The protein localises to the membrane. In terms of biological role, essential subunit of the gamma-secretase complex, an endoprotease complex that catalyzes the intramembrane cleavage of integral membrane proteins such as Notch receptors and APP (amyloid-beta precursor protein). The gamma-secretase complex plays a role in Notch and Wnt signaling cascades and regulation of downstream processes via its role in processing key regulatory proteins, and by regulating cytosolic CTNNB1 levels. PSENEN modulates both endoproteolysis of presenilin and gamma-secretase activity. The sequence is that of Gamma-secretase subunit PEN-2 (PSENEN) from Bos taurus (Bovine).